We begin with the raw amino-acid sequence, 490 residues long: Endoglucanase 13 (490 aa).

A signal peptide spans Met1–Ala26. N-linked (GlcNAc...) asparagine glycosylation is present at Asn6. Asp86 acts as the Nucleophile in catalysis. Residues His412, Asp464, and Glu473 contribute to the active site.

It belongs to the glycosyl hydrolase 9 (cellulase E) family.

It localises to the secreted. The enzyme catalyses Endohydrolysis of (1-&gt;4)-beta-D-glucosidic linkages in cellulose, lichenin and cereal beta-D-glucans.. The polypeptide is Endoglucanase 13 (Arabidopsis thaliana (Mouse-ear cress)).